Reading from the N-terminus, the 369-residue chain is MMPASNPKKNSSERRIVFHVDMDSFFASVEVRERPELKNLPVIVGSDPKGGSGRGVVSTCSYEARKYGIHSAMPISQAYRFCPDAVFLPVNMKLYAGVSAGVMEILRGFAEKFQQVSVDEAYLIPGSGVRNFEEAALYALRIKDEVQRQQKITCSVGVGPNKLVSKIASGFQKPDGLTVVRPEDVRDFLFPLPVSRIPGVGEKTEETLKKMGINRVEELANCDVQMLSEKLGKMGFRLKQLANGLDFEELVEKESVKSISRHGTFAEDTDDPVKVSGSLDLLIESVHGSLMKHSFLFKTITLTVRFEDFSTYTRSRTLSIWTSDVFVIKRTAMQLLSEFTGRRKFRLVGVGVTKLRERDERQTLITDFP.

The region spanning V17–G201 is the UmuC domain. Residues D21 and D119 each contribute to the Mg(2+) site. E120 is an active-site residue.

Belongs to the DNA polymerase type-Y family. In terms of assembly, monomer. Mg(2+) is required as a cofactor.

It localises to the cytoplasm. The enzyme catalyses DNA(n) + a 2'-deoxyribonucleoside 5'-triphosphate = DNA(n+1) + diphosphate. In terms of biological role, poorly processive, error-prone DNA polymerase involved in untargeted mutagenesis. Copies undamaged DNA at stalled replication forks, which arise in vivo from mismatched or misaligned primer ends. These misaligned primers can be extended by PolIV. Exhibits no 3'-5' exonuclease (proofreading) activity. May be involved in translesional synthesis. This Methanosarcina mazei (strain ATCC BAA-159 / DSM 3647 / Goe1 / Go1 / JCM 11833 / OCM 88) (Methanosarcina frisia) protein is DNA polymerase IV 2 (dbh2).